The chain runs to 101 residues: Large ribosomal subunit protein uL24 (101 aa).

It belongs to the universal ribosomal protein uL24 family. Part of the 50S ribosomal subunit.

In terms of biological role, one of two assembly initiator proteins, it binds directly to the 5'-end of the 23S rRNA, where it nucleates assembly of the 50S subunit. Its function is as follows. One of the proteins that surrounds the polypeptide exit tunnel on the outside of the subunit. The polypeptide is Large ribosomal subunit protein uL24 (Streptococcus mutans serotype c (strain ATCC 700610 / UA159)).